A 438-amino-acid polypeptide reads, in one-letter code: Putative galacturan 1,4-alpha-galacturonidase A (438 aa).

The signal sequence occupies residues 1-21; sequence MRMPSAISIGVFAGLSLAASA. 4 N-linked (GlcNAc...) asparagine glycosylation sites follow: asparagine 28, asparagine 102, asparagine 111, and asparagine 197. PbH1 repeat units follow at residues 186-222 and 223-244; these read SSHINLDNFYVNATNHDSSVSPEGEWVQNTDGIDTYR and SDHITITNWVYQGGDDAVAFKG. The active-site Proton donor is the aspartate 237. Residues asparagine 245, asparagine 253, asparagine 279, asparagine 325, asparagine 353, asparagine 372, and asparagine 388 are each glycosylated (N-linked (GlcNAc...) asparagine). PbH1 repeat units lie at residues 246-266, 277-303, and 323-344; these read STNIHVENVTVYGGPGIAFGS, VENVTVRNVRVQPSFQRAMNSGVYFKS, and VRNVSVENLRLKDVQLPVYIDT. The cysteines at positions 397 and 403 are disulfide-linked. An N-linked (GlcNAc...) asparagine glycan is attached at asparagine 418.

The protein belongs to the glycosyl hydrolase 28 family.

The protein resides in the secreted. It catalyses the reaction [(1-&gt;4)-alpha-D-galacturonosyl](n) + H2O = alpha-D-galacturonate + [(1-&gt;4)-alpha-D-galacturonosyl](n-1). Specific in hydrolyzing the terminal glycosidic bond of polygalacturonic acid and oligogalacturonates. The polypeptide is Putative galacturan 1,4-alpha-galacturonidase A (rgxA) (Aspergillus niger).